The chain runs to 381 residues: tRNA (guanine(26)-N(2))-dimethyltransferase (381 aa).

The region spanning 7 to 378 (IEVQEGKAKI…APYEVFIETI (372 aa)) is the Trm1 methyltransferase domain. 5 residues coordinate S-adenosyl-L-methionine: Arg39, Arg64, Asp81, Asp123, and Ala124.

This sequence belongs to the class I-like SAM-binding methyltransferase superfamily. Trm1 family.

The catalysed reaction is guanosine(26) in tRNA + 2 S-adenosyl-L-methionine = N(2)-dimethylguanosine(26) in tRNA + 2 S-adenosyl-L-homocysteine + 2 H(+). In terms of biological role, dimethylates a single guanine residue at position 26 of a number of tRNAs using S-adenosyl-L-methionine as donor of the methyl groups. The protein is tRNA (guanine(26)-N(2))-dimethyltransferase of Pyrococcus horikoshii (strain ATCC 700860 / DSM 12428 / JCM 9974 / NBRC 100139 / OT-3).